A 232-amino-acid chain; its full sequence is GTP cyclohydrolase III (232 aa).

Belongs to the archaeal-type GTP cyclohydrolase family.

The catalysed reaction is GTP + 3 H2O = 2-amino-5-formylamino-6-(5-phospho-D-ribosylamino)pyrimidin-4(3H)-one + 2 phosphate + 2 H(+). Functionally, catalyzes the formation of 2-amino-5-formylamino-6-ribofuranosylamino-4(3H)-pyrimidinone ribonucleotide monophosphate and inorganic phosphate from GTP. Also has an independent pyrophosphate phosphohydrolase activity. This is GTP cyclohydrolase III from Saccharolobus islandicus (strain Y.N.15.51 / Yellowstone #2) (Sulfolobus islandicus).